Here is a 527-residue protein sequence, read N- to C-terminus: UvrABC system protein C (527 aa).

The GIY-YIG domain maps to Lys-9 to Ile-87. The region spanning Asp-191–Leu-226 is the UVR domain.

The protein belongs to the UvrC family. Interacts with UvrB in an incision complex.

Its subcellular location is the cytoplasm. Its function is as follows. The UvrABC repair system catalyzes the recognition and processing of DNA lesions. UvrC both incises the 5' and 3' sides of the lesion. The N-terminal half is responsible for the 3' incision and the C-terminal half is responsible for the 5' incision. This chain is UvrABC system protein C, found in Methanococcus maripaludis (strain DSM 14266 / JCM 13030 / NBRC 101832 / S2 / LL).